A 325-amino-acid chain; its full sequence is Beta-ketoacyl-[acyl-carrier-protein] synthase III (325 aa).

Residues C116 and H252 contribute to the active site. The tract at residues Q253 to R257 is ACP-binding. N282 is a catalytic residue.

This sequence belongs to the thiolase-like superfamily. FabH family. Homodimer.

It localises to the cytoplasm. It carries out the reaction malonyl-[ACP] + acetyl-CoA + H(+) = 3-oxobutanoyl-[ACP] + CO2 + CoA. It functions in the pathway lipid metabolism; fatty acid biosynthesis. Catalyzes the condensation reaction of fatty acid synthesis by the addition to an acyl acceptor of two carbons from malonyl-ACP. Catalyzes the first condensation reaction which initiates fatty acid synthesis and may therefore play a role in governing the total rate of fatty acid production. Possesses both acetoacetyl-ACP synthase and acetyl transacylase activities. Its substrate specificity determines the biosynthesis of branched-chain and/or straight-chain of fatty acids. This chain is Beta-ketoacyl-[acyl-carrier-protein] synthase III, found in Xanthomonas axonopodis pv. citri (strain 306).